Consider the following 459-residue polypeptide: Putrescine aminotransferase (459 aa).

Pyridoxal 5'-phosphate is bound by residues 150–151 (GT) and Q274. N6-(pyridoxal phosphate)lysine is present on K300. A pyridoxal 5'-phosphate-binding site is contributed by T332.

This sequence belongs to the class-III pyridoxal-phosphate-dependent aminotransferase family. Putrescine aminotransferase subfamily. It depends on pyridoxal 5'-phosphate as a cofactor.

It carries out the reaction an alkane-alpha,omega-diamine + 2-oxoglutarate = an omega-aminoaldehyde + L-glutamate. It catalyses the reaction putrescine + 2-oxoglutarate = 1-pyrroline + L-glutamate + H2O. The catalysed reaction is cadaverine + 2-oxoglutarate = 5-aminopentanal + L-glutamate. Its pathway is amine and polyamine degradation; putrescine degradation; 4-aminobutanal from putrescine (transaminase route): step 1/1. Catalyzes the aminotransferase reaction from putrescine to 2-oxoglutarate, leading to glutamate and 4-aminobutanal, which spontaneously cyclizes to form 1-pyrroline. This is the first step in one of two pathways for putrescine degradation, where putrescine is converted into 4-aminobutanoate (gamma-aminobutyrate or GABA) via 4-aminobutanal. Also functions as a cadaverine transaminase in a a L-lysine degradation pathway to succinate that proceeds via cadaverine, glutarate and L-2-hydroxyglutarate. This Salmonella agona (strain SL483) protein is Putrescine aminotransferase.